The sequence spans 2435 residues: ATP-binding cassette sub-family A member 2 (2435 aa).

N-linked (GlcNAc...) asparagine glycosylation is present at asparagine 14. The next 2 helical transmembrane spans lie at 22–42 (PWVL…LLGL) and 54–74 (AFYT…QSLC). N-linked (GlcNAc...) asparagine glycans are attached at residues asparagine 89, asparagine 168, and asparagine 173. At glutamine 271 the chain carries N5-methylglutamine. Residues asparagine 305, asparagine 368, asparagine 379, asparagine 420, asparagine 432, asparagine 476, asparagine 484, asparagine 494, asparagine 530, asparagine 544, asparagine 590, asparagine 600, and asparagine 628 are each glycosylated (N-linked (GlcNAc...) asparagine). Transmembrane regions (helical) follow at residues 699–719 (FLFV…VYSV), 750–770 (VAWF…LTAI), 782–802 (VVII…FCFL), 813–833 (ASAC…YVAI), 857–877 (AFGL…GIQW), and 893–913 (LLAV…TWYI). The region spanning 990–1221 (VCVDKLTKVY…YGDGYRLTLV (232 aa)) is the ABC transporter 1 domain. 1024–1031 (GHNGAGKT) is an ATP binding site. Disordered stretches follow at residues 1223 to 1243 (RPAE…PGRA) and 1325 to 1357 (DQSL…GHAG). Residues serine 1238, serine 1327, and serine 1331 each carry the phosphoserine modification. The span at 1333-1342 (ADVKESRKDV) shows a compositional bias: basic and acidic residues. The N-linked (GlcNAc...) asparagine glycan is linked to asparagine 1408. Residues 1456–1476 (ALFSQILLPAFFVCVAMTVAL) traverse the membrane as a helical segment. 3 N-linked (GlcNAc...) asparagine glycosylation sites follow: asparagine 1496, asparagine 1549, and asparagine 1557. A disordered region spans residues 1586–1610 (SNFVPPPPSPAPSDSPASPDEDLQA). Over residues 1589 to 1598 (VPPPPSPAPS) the composition is skewed to pro residues. 3 N-linked (GlcNAc...) asparagine glycosylation sites follow: asparagine 1612, asparagine 1677, and asparagine 1775. 5 helical membrane passes run 1792 to 1812 (VVIA…FVVF), 1841 to 1861 (VWDM…LFVF), 1872 to 1892 (FPAV…IMYP), 1905 to 1925 (VFLI…TFLL), and 1991 to 2011 (GLVA…MCQY). Residues 2050-2285 (VKIENLTKVY…FGDGYMITVR (236 aa)) form the ABC transporter 2 domain. Asparagine 2054 is a glycosylation site (N-linked (GlcNAc...) asparagine). 2087–2094 (GVNGAGKT) lines the ATP pocket. The residue at position 2412 (threonine 2412) is a Phosphothreonine.

Belongs to the ABC transporter superfamily. ABCA family. Methylated at Gln-271 by N6AMT1. As to expression, highly expressed in the brain,peripheral blood leukocytes and ovary, whereas lower levels of expression is observed in kidney and liver. In terms of tissue distribution, weakly expressed in brain and highly in peripheral blood leukocytes.

The protein resides in the endosome membrane. It is found in the lysosome membrane. Probable lipid transporter that modulates cholesterol sequestration in the late endosome/lysosome by regulating the intracellular sphingolipid metabolism, in turn participates in cholesterol homeostasis. May alter the transbilayer distribution of ceramide in the intraluminal membrane lipid bilayer, favoring its retention in the outer leaflet that results in increased acid ceramidase activity in the late endosome/lysosome, facilitating ceramide deacylation to sphingosine leading to the sequestration of free cholesterol in lysosomes. In addition regulates amyloid-beta production either by activating a signaling pathway that regulates amyloid precursor protein transcription through the modulation of sphingolipid metabolism or through its role in gamma-secretase processing of APP. May play a role in myelin formation. The sequence is that of ATP-binding cassette sub-family A member 2 from Homo sapiens (Human).